The following is a 198-amino-acid chain: Ribonuclease HII (198 aa).

The 190-residue stretch at 2–191 (VLECGVDETG…IRELLVGKDN (190 aa)) folds into the RNase H type-2 domain. Residues D8, E9, and D100 each contribute to the a divalent metal cation site.

Belongs to the RNase HII family. It depends on Mn(2+) as a cofactor. The cofactor is Mg(2+).

It localises to the cytoplasm. It catalyses the reaction Endonucleolytic cleavage to 5'-phosphomonoester.. Endonuclease that specifically degrades the RNA of RNA-DNA hybrids. The protein is Ribonuclease HII of Desulforamulus reducens (strain ATCC BAA-1160 / DSM 100696 / MI-1) (Desulfotomaculum reducens).